The chain runs to 172 residues: Dual-action ribosomal maturation protein DarP (172 aa).

This sequence belongs to the DarP family.

The protein localises to the cytoplasm. Member of a network of 50S ribosomal subunit biogenesis factors which assembles along the 30S-50S interface, preventing incorrect 23S rRNA structures from forming. Promotes peptidyl transferase center (PTC) maturation. The sequence is that of Dual-action ribosomal maturation protein DarP from Ectopseudomonas mendocina (strain ymp) (Pseudomonas mendocina).